A 95-amino-acid chain; its full sequence is UPF0235 protein MS0322 (95 aa).

Belongs to the UPF0235 family.

The sequence is that of UPF0235 protein MS0322 from Mannheimia succiniciproducens (strain KCTC 0769BP / MBEL55E).